Reading from the N-terminus, the 254-residue chain is MLLVMDMGNSHIHIGVFDGDIIVSQIRYATSSVDSTSDQMGVFLRQALRENSVDLGKIDGYGISSVVPHLNYSLGSAVIKYFNIKPFFISMDTTDLDMSAVEAHQVGADRIASCISAIADHPNKDLLIIDLGTATTFDLVTKDKKYLSGSIMPGVKLSLNALCQGASQLSSVTIVKPEVAIGYDTKTNIRSGLYYGHLGALRRSVEEFGSPVYTIATGGFAGLFKEEDIFNEISPDLILRGIRIAFLENNKKGV.

Residue 6–13 participates in ATP binding; it reads DMGNSHIH. 107–110 serves as a coordination point for substrate; the sequence is GADR. The active-site Proton acceptor is aspartate 109. Aspartate 130 provides a ligand contact to K(+). Threonine 133 is an ATP binding site. Substrate is bound at residue threonine 185.

Belongs to the type III pantothenate kinase family. Homodimer. Requires NH4(+) as cofactor. K(+) serves as cofactor.

It is found in the cytoplasm. The enzyme catalyses (R)-pantothenate + ATP = (R)-4'-phosphopantothenate + ADP + H(+). It participates in cofactor biosynthesis; coenzyme A biosynthesis; CoA from (R)-pantothenate: step 1/5. Functionally, catalyzes the phosphorylation of pantothenate (Pan), the first step in CoA biosynthesis. This is Type III pantothenate kinase 2 from Francisella tularensis subsp. holarctica (strain LVS).